The sequence spans 771 residues: MANSSLLRVVLVALLLLGSVTVSAGDGRGTPIAFQAEVSKMLDILVNSLYTNRAVFLRELISNGSDALDKIRVLYLTSPKEPLTKDGEAPTMDLRISFDKEKSELILRDGGVGMTKEELAKHLGSLGTSGTKHFLEKLQEGVGAVGGDQNNLIGQFGVGFYSVFLVGDRVRVASKSDDSDEQYVWESKGDGQYFLYPDPRGNTLGRGTEITIELKPDAEQFLSAETIKKTIHQYSEFINFPIYVQEEVEVASTAATPESAAEERSLDEGAVEEDPDKEGDTQGVVKEKRWTLVNENRPIWTRPIGNVTEEEYHKFYKAFSGDYRDPLYFNHFKVEGEVDFDSILFVPTTVDPASFSDDNAVPNTNIKLYVRRVFITDEFRDLLPRYLNFVKGIVDSNDLPLNVSREVLQESRILRVIKKKLVRKTLSMFADIAAQDEAIANGKQVENPAPSGHTHLKKPAYTKFWELYGKHLRLGVMLDSNNRNRLTKLFRYKSSRSESEYISLQTYVDRMKKGQKGIYYLSGDSVARIKKSPVLEDAVNHDVEVIFMTDAIDEYVVSQLTDFAGKKLINLAKEGVQFEESDARQRVVDRKRKEKYDSFFTHLRALFGYSEVRKVILTKRMTNEAFIVSSSENQITARLASIMRGQSMSLANQQLTAERVLEVNYRHPLVDEMFKRFTVDEDDEVATDIAWVLYDTANLQAEFPVADVAAYSKRINRLLRSSVDLSADDSLLPPDDAEYTVSDTETEEEEEQPKVDTNAHEEAETDGEGDL.

The signal sequence occupies residues 1–24 (MANSSLLRVVLVALLLLGSVTVSA). 3 residues coordinate ATP: Asn-63, Asp-109, and Phe-160. The N-linked (GlcNAc...) asparagine glycan is linked to Asn-63. Residues 254-282 (AATPESAAEERSLDEGAVEEDPDKEGDTQ) form a disordered region. 2 N-linked (GlcNAc...) asparagine glycosylation sites follow: Asn-306 and Asn-402. The disordered stretch occupies residues 727–771 (ADDSLLPPDDAEYTVSDTETEEEEEQPKVDTNAHEEAETDGEGDL). Residues 752–762 (QPKVDTNAHEE) show a composition bias toward basic and acidic residues. Positions 768 to 771 (EGDL) match the Prevents secretion from ER motif.

It belongs to the heat shock protein 90 family. As to quaternary structure, homotetramer.

It localises to the endoplasmic reticulum. Its function is as follows. Molecular chaperone that functions in the processing and transport of secreted proteins. Required for the synthesis of lipophosphoglycan (LPG), a cell surface glycoconjugate. Necessary for the attachment of the galactosyl residue to the mannose within the phosphoglycan repeats of the nascent LPG chain. Also required for addition of phosphoglycan to acid phosphatase. Not required for normal growth. Has ATPase activity. Binds heparin with micromolar affinity which may facilitate infection of host cells. This chain is Endoplasmin homolog, found in Leishmania donovani.